The sequence spans 264 residues: Putative hydro-lyase Cgl2544/cg2803 (264 aa).

The protein belongs to the D-glutamate cyclase family.

This Corynebacterium glutamicum (strain ATCC 13032 / DSM 20300 / JCM 1318 / BCRC 11384 / CCUG 27702 / LMG 3730 / NBRC 12168 / NCIMB 10025 / NRRL B-2784 / 534) protein is Putative hydro-lyase Cgl2544/cg2803.